The primary structure comprises 462 residues: Argininosuccinate lyase (462 aa).

Belongs to the lyase 1 family. Argininosuccinate lyase subfamily.

Its subcellular location is the cytoplasm. The enzyme catalyses 2-(N(omega)-L-arginino)succinate = fumarate + L-arginine. The protein operates within amino-acid biosynthesis; L-arginine biosynthesis; L-arginine from L-ornithine and carbamoyl phosphate: step 3/3. This Prochlorococcus marinus (strain MIT 9211) protein is Argininosuccinate lyase.